The primary structure comprises 122 residues: Large ribosomal subunit protein uL22 (122 aa).

Positions V103–K122 are disordered.

Belongs to the universal ribosomal protein uL22 family. As to quaternary structure, part of the 50S ribosomal subunit.

This protein binds specifically to 23S rRNA; its binding is stimulated by other ribosomal proteins, e.g. L4, L17, and L20. It is important during the early stages of 50S assembly. It makes multiple contacts with different domains of the 23S rRNA in the assembled 50S subunit and ribosome. Functionally, the globular domain of the protein is located near the polypeptide exit tunnel on the outside of the subunit, while an extended beta-hairpin is found that lines the wall of the exit tunnel in the center of the 70S ribosome. This is Large ribosomal subunit protein uL22 from Helicobacter pylori (strain P12).